Here is a 440-residue protein sequence, read N- to C-terminus: Serine hydroxymethyltransferase (440 aa).

Residues Leu119 and 123-125 contribute to the (6S)-5,6,7,8-tetrahydrofolate site; that span reads GHL. Lys228 bears the N6-(pyridoxal phosphate)lysine mark. 370-372 contacts (6S)-5,6,7,8-tetrahydrofolate; the sequence is SPF.

This sequence belongs to the SHMT family. Homodimer. The cofactor is pyridoxal 5'-phosphate.

Its subcellular location is the cytoplasm. It carries out the reaction (6R)-5,10-methylene-5,6,7,8-tetrahydrofolate + glycine + H2O = (6S)-5,6,7,8-tetrahydrofolate + L-serine. It functions in the pathway one-carbon metabolism; tetrahydrofolate interconversion. Its pathway is amino-acid biosynthesis; glycine biosynthesis; glycine from L-serine: step 1/1. Its function is as follows. Catalyzes the reversible interconversion of serine and glycine with tetrahydrofolate (THF) serving as the one-carbon carrier. This reaction serves as the major source of one-carbon groups required for the biosynthesis of purines, thymidylate, methionine, and other important biomolecules. Also exhibits THF-independent aldolase activity toward beta-hydroxyamino acids, producing glycine and aldehydes, via a retro-aldol mechanism. The chain is Serine hydroxymethyltransferase from Chloroherpeton thalassium (strain ATCC 35110 / GB-78).